Consider the following 504-residue polypeptide: Signal transduction histidine-protein kinase/phosphatase MprB (504 aa).

The Cytoplasmic portion of the chain corresponds to 1 to 26; the sequence is MWWFRRRDRAPLRATSSLSLRWRVML. A helical transmembrane segment spans residues 27–47; sequence LAMSMVAMVVVLMSFAVYAVI. The Extracellular segment spans residues 48–163; it reads SAALYSDIDN…PTEAVMNKLR (116 aa). A helical transmembrane segment spans residues 164 to 184; that stretch reads WVLLIVGGIGVAVAAVAGGMV. Over 185-504 the chain is Cytoplasmic; sequence TRAGLRPVGR…SVESQSTRAT (320 aa). Positions 186–238 constitute an HAMP domain; that stretch reads RAGLRPVGRLTEAAERVARTDDLRPIPVFGSDELARLTEAFNLMLRALAESRE. In terms of domain architecture, Histidine kinase spans 246 to 466; that stretch reads DAGHELRTPL…SIYVLLPGRR (221 aa). At histidine 249 the chain carries Phosphohistidine; by autocatalysis. A disordered region spans residues 471–504; the sequence is QLPGATAGARSTDIENSRGSANVISVESQSTRAT. Positions 487 to 504 are enriched in polar residues; that stretch reads SRGSANVISVESQSTRAT.

Requires Mg(2+) as cofactor. Mn(2+) is required as a cofactor. In terms of processing, autophosphorylated.

The protein resides in the cell membrane. The enzyme catalyses ATP + protein L-histidine = ADP + protein N-phospho-L-histidine.. Member of the two-component regulatory system MprB/MprA which contributes to maintaining a balance among several systems involved in stress resistance and is required for establishment and maintenance of persistent infection in the host. In response to environmental signals MprB acts both as a membrane-associated protein kinase that undergoes autophosphorylation and subsequently transfers the phosphate to MprA, and a protein phosphatase that dephosphorylates phospho-MprA. The chain is Signal transduction histidine-protein kinase/phosphatase MprB (mprB) from Mycobacterium tuberculosis (strain ATCC 25177 / H37Ra).